We begin with the raw amino-acid sequence, 526 residues long: Glutamate--cysteine ligase (526 aa).

It belongs to the glutamate--cysteine ligase type 1 family. Type 1 subfamily.

It carries out the reaction L-cysteine + L-glutamate + ATP = gamma-L-glutamyl-L-cysteine + ADP + phosphate + H(+). The protein operates within sulfur metabolism; glutathione biosynthesis; glutathione from L-cysteine and L-glutamate: step 1/2. The polypeptide is Glutamate--cysteine ligase (Proteus mirabilis (strain HI4320)).